The sequence spans 34 residues: Crassicorin-II (34 aa).

Cys-6 and Cys-30 are disulfide-bonded.

As to expression, highly expressed by the mesenteries. Moderately expressed by the pharynx. Weakly expressed by the gonad and pedal disk. No expression in tentacle.

Its subcellular location is the secreted. It is found in the nematocyst. Peptide with both antimicrobial and neurotoxin activities. Cationic AMP with antimicrobial activity against both Gram-positive bacteria (B.subtilis) and Gram-negative bacteria (E.coli and S.enterica). Shows no significant antimicrobial activity against bacteria S.aureus and P.aeruginosa, as well as the fungus C.albicans. In vivo, induces reversible paralytic activity towards the shrimp P.paucidens. May act by impairing sodium or potassium channels in the prey. The chain is Crassicorin-II from Urticina crassicornis (Mottled anemone).